We begin with the raw amino-acid sequence, 66 residues long: Large ribosomal subunit protein uL29 (66 aa).

It belongs to the universal ribosomal protein uL29 family.

The sequence is that of Large ribosomal subunit protein uL29 (rpmC) from Helicobacter pylori (strain J99 / ATCC 700824) (Campylobacter pylori J99).